The following is a 485-amino-acid chain: Ataxin-10 (485 aa).

It belongs to the ataxin-10 family.

The protein localises to the cytoplasm. It localises to the perinuclear region. Its subcellular location is the midbody. Functionally, may play a role in the regulation of cytokinesis. May play a role in signaling by stimulating protein glycosylation. Induces neuritogenesis by activating the Ras-MAP kinase pathway and is necessary for the survival of cerebellar neurons. Does not appear to play a major role in ciliogenesis. This is Ataxin-10 (atxn10) from Xenopus tropicalis (Western clawed frog).